The primary structure comprises 472 residues: Siroheme synthase 2 (472 aa).

The precorrin-2 dehydrogenase /sirohydrochlorin ferrochelatase stretch occupies residues 1 to 204; the sequence is MDYFPIFCQL…EDQVQVEQHV (204 aa). NAD(+) is bound by residues 22–23 and 43–44; these read EV and CE. The residue at position 128 (Ser128) is a Phosphoserine. Positions 216-472 are uroporphyrinogen-III C-methyltransferase; that stretch reads GEVVLVGAGP…GMKEQVERVG (257 aa). An S-adenosyl-L-methionine-binding site is contributed by Pro225. Asp248 functions as the Proton acceptor in the catalytic mechanism. Lys270 serves as the catalytic Proton donor. Residues 301 to 303, Ile306, 331 to 332, Met382, and Gly411 contribute to the S-adenosyl-L-methionine site; these read GGD and TA.

This sequence in the N-terminal section; belongs to the precorrin-2 dehydrogenase / sirohydrochlorin ferrochelatase family. It in the C-terminal section; belongs to the precorrin methyltransferase family.

The enzyme catalyses uroporphyrinogen III + 2 S-adenosyl-L-methionine = precorrin-2 + 2 S-adenosyl-L-homocysteine + H(+). It catalyses the reaction precorrin-2 + NAD(+) = sirohydrochlorin + NADH + 2 H(+). The catalysed reaction is siroheme + 2 H(+) = sirohydrochlorin + Fe(2+). Its pathway is cofactor biosynthesis; adenosylcobalamin biosynthesis; precorrin-2 from uroporphyrinogen III: step 1/1. It participates in cofactor biosynthesis; adenosylcobalamin biosynthesis; sirohydrochlorin from precorrin-2: step 1/1. The protein operates within porphyrin-containing compound metabolism; siroheme biosynthesis; precorrin-2 from uroporphyrinogen III: step 1/1. It functions in the pathway porphyrin-containing compound metabolism; siroheme biosynthesis; siroheme from sirohydrochlorin: step 1/1. Its pathway is porphyrin-containing compound metabolism; siroheme biosynthesis; sirohydrochlorin from precorrin-2: step 1/1. Its function is as follows. Multifunctional enzyme that catalyzes the SAM-dependent methylations of uroporphyrinogen III at position C-2 and C-7 to form precorrin-2 via precorrin-1. Then it catalyzes the NAD-dependent ring dehydrogenation of precorrin-2 to yield sirohydrochlorin. Finally, it catalyzes the ferrochelation of sirohydrochlorin to yield siroheme. The polypeptide is Siroheme synthase 2 (Yersinia enterocolitica serotype O:8 / biotype 1B (strain NCTC 13174 / 8081)).